Here is a 391-residue protein sequence, read N- to C-terminus: Elongation factor Tu (391 aa).

One can recognise a tr-type G domain in the interval 10–201 (KPHVNIGTIG…EVDKYIPTPE (192 aa)). Residues 19 to 26 (GHVDHGKT) form a G1 region. 19-26 (GHVDHGKT) is a binding site for GTP. Thr26 contacts Mg(2+). Positions 55-59 (GITIS) are G2. A G3 region spans residues 76-79 (DCPG). GTP contacts are provided by residues 76–80 (DCPGH) and 131–134 (NKVD). Residues 131-134 (NKVD) are G4. The tract at residues 169 to 171 (SAL) is G5.

The protein belongs to the TRAFAC class translation factor GTPase superfamily. Classic translation factor GTPase family. EF-Tu/EF-1A subfamily. Monomer.

It localises to the cytoplasm. It catalyses the reaction GTP + H2O = GDP + phosphate + H(+). Its function is as follows. GTP hydrolase that promotes the GTP-dependent binding of aminoacyl-tRNA to the A-site of ribosomes during protein biosynthesis. The sequence is that of Elongation factor Tu from Chelativorans sp. (strain BNC1).